An 805-amino-acid polypeptide reads, in one-letter code: Transforming acidic coiled-coil-containing protein 1 (805 aa).

At A2 the chain carries N-acetylalanine. Residue A2 is the site of N-myristoyl glycine attachment. The tract at residues 2–55 (AFSPWQILSPVQWAKWTWSAVRGGAAGEDEAGGPEGDPEEEDSQAETKSLSFSS) is interaction with LSM7 and SNRPG. S4, S10, and S44 each carry phosphoserine. Residues 23-140 (RGGAAGEDEA…SVKNFREEPE (118 aa)) are disordered. Acidic residues predominate over residues 28–45 (GEDEAGGPEGDPEEEDSQ). 2 stretches are compositionally biased toward polar residues: residues 47–60 (ETKS…SEGN) and 111–128 (SKTC…QAID). Over residues 130 to 140 (HSVKNFREEPE) the composition is skewed to basic and acidic residues. Phosphoserine occurs at positions 147 and 153. The tract at residues 152-259 (FSIETKDSTD…TNAAVEGTPL (108 aa)) is interaction with TDRD7. Residues 206–427 (EASAEADLKA…DPDNFDESMD (222 aa)) form an interaction with YEATS4 region. SPAZ domains are found at residues 215–297 (AGNS…TPGT) and 359–507 (SKSA…TDEE). The segment at 215-457 (AGNSCPELVP…VNEILESPKK (243 aa)) is disordered. The short motif at 226-241 (RRSKLRKPKPVPLRKK) is the Bipartite nuclear localization signal 1 element. Basic residues predominate over residues 226–242 (RRSKLRKPKPVPLRKKA). S228 bears the Phosphoserine; by AURKC mark. S248 and S276 each carry phosphoserine. 3 stretches are compositionally biased toward polar residues: residues 296-305 (GTLSSDTNDS), 377-413 (LSQT…SSEG), and 431-447 (PTTT…TGNH). Residues S381 and S406 each carry the phosphoserine modification. The Bipartite nuclear localization signal 2 signature appears at 455-471 (PKKAKSRLITSGCKVKK). S483 is modified (phosphoserine). The segment at 493–526 (ISDISNRDGHATDEEKLASTSCGQKSAGAEVKGE) is disordered. Over residues 497–509 (SNRDGHATDEEKL) the composition is skewed to basic and acidic residues. A Phosphotyrosine modification is found at Y533. S591 is modified (phosphoserine). Residues 610-805 (IREEIITKEI…ELIAKLGKTD (196 aa)) are a coiled coil. The interaction with CH-TOG stretch occupies residues 701–805 (VLEGFKKNEE…ELIAKLGKTD (105 aa)).

It belongs to the TACC family. As to quaternary structure, interacts with KIAA0097/CH-TOG and with the oncogenic transcription factor YEATS4. Interacts with AURKA, AURKB and AURKC. Interacts with LSM7, TDRD7 and SNRPG. Interacts with GCN5L2 and PCAF. Interacts with the thyroid hormone receptors THRB and THRA, predominantly with isoform alpha-2. The interaction with THRA isoform alpha-1 and THRB is decreased in the presence of thyroid hormone T3. Also interacts with other nuclear receptors, including ESR1, NR3C1, PPARG, RARA and RXRA, preferentially in the absence of their hormonal ligands. Isoform 1 is heavily phosphorylated; isoform 6 is not. As to expression, isoform 1, isoform 3 and isoform 5 are ubiquitous. Isoform 2 is strongly expressed in the brain, weakly detectable in lung and colon, and overexpressed in gastric cancer. Isoform 4 is not detected in normal tissues, but strong expression was found in gastric cancer tissues. Down-regulated in a subset of cases of breast cancer.

The protein resides in the cytoplasm. Its subcellular location is the nucleus. It localises to the cytoskeleton. It is found in the microtubule organizing center. The protein localises to the centrosome. The protein resides in the midbody. Its subcellular location is the membrane. Its function is as follows. Involved in transcription regulation induced by nuclear receptors, including in T3 thyroid hormone and all-trans retinoic acid pathways. Might promote the nuclear localization of the receptors. Likely involved in the processes that promote cell division prior to the formation of differentiated tissues. In Homo sapiens (Human), this protein is Transforming acidic coiled-coil-containing protein 1 (TACC1).